The primary structure comprises 254 residues: Thiazole synthase (254 aa).

The active-site Schiff-base intermediate with DXP is the lysine 95. Residues glycine 156, 182 to 183 (AG), and 204 to 205 (NT) each bind 1-deoxy-D-xylulose 5-phosphate.

It belongs to the ThiG family. In terms of assembly, homotetramer. Forms heterodimers with either ThiH or ThiS.

The protein resides in the cytoplasm. The enzyme catalyses [ThiS sulfur-carrier protein]-C-terminal-Gly-aminoethanethioate + 2-iminoacetate + 1-deoxy-D-xylulose 5-phosphate = [ThiS sulfur-carrier protein]-C-terminal Gly-Gly + 2-[(2R,5Z)-2-carboxy-4-methylthiazol-5(2H)-ylidene]ethyl phosphate + 2 H2O + H(+). It participates in cofactor biosynthesis; thiamine diphosphate biosynthesis. In terms of biological role, catalyzes the rearrangement of 1-deoxy-D-xylulose 5-phosphate (DXP) to produce the thiazole phosphate moiety of thiamine. Sulfur is provided by the thiocarboxylate moiety of the carrier protein ThiS. In vitro, sulfur can be provided by H(2)S. In Shewanella piezotolerans (strain WP3 / JCM 13877), this protein is Thiazole synthase.